The following is a 311-amino-acid chain: Methionyl-tRNA formyltransferase (311 aa).

112-115 (SLLP) is a (6S)-5,6,7,8-tetrahydrofolate binding site.

The protein belongs to the Fmt family.

It catalyses the reaction L-methionyl-tRNA(fMet) + (6R)-10-formyltetrahydrofolate = N-formyl-L-methionyl-tRNA(fMet) + (6S)-5,6,7,8-tetrahydrofolate + H(+). Functionally, attaches a formyl group to the free amino group of methionyl-tRNA(fMet). The formyl group appears to play a dual role in the initiator identity of N-formylmethionyl-tRNA by promoting its recognition by IF2 and preventing the misappropriation of this tRNA by the elongation apparatus. This is Methionyl-tRNA formyltransferase from Agrobacterium fabrum (strain C58 / ATCC 33970) (Agrobacterium tumefaciens (strain C58)).